The following is a 675-amino-acid chain: UvrABC system protein B (675 aa).

Residues Gln-35–Arg-192 enclose the Helicase ATP-binding domain. An ATP-binding site is contributed by Gly-48–Thr-55. The short motif at Tyr-101–Ile-124 is the Beta-hairpin element. In terms of domain architecture, Helicase C-terminal spans Gln-439–Ile-605. One can recognise a UVR domain in the interval Ala-633–Arg-668.

The protein belongs to the UvrB family. As to quaternary structure, forms a heterotetramer with UvrA during the search for lesions. Interacts with UvrC in an incision complex.

The protein localises to the cytoplasm. The UvrABC repair system catalyzes the recognition and processing of DNA lesions. A damage recognition complex composed of 2 UvrA and 2 UvrB subunits scans DNA for abnormalities. Upon binding of the UvrA(2)B(2) complex to a putative damaged site, the DNA wraps around one UvrB monomer. DNA wrap is dependent on ATP binding by UvrB and probably causes local melting of the DNA helix, facilitating insertion of UvrB beta-hairpin between the DNA strands. Then UvrB probes one DNA strand for the presence of a lesion. If a lesion is found the UvrA subunits dissociate and the UvrB-DNA preincision complex is formed. This complex is subsequently bound by UvrC and the second UvrB is released. If no lesion is found, the DNA wraps around the other UvrB subunit that will check the other stand for damage. In Bordetella petrii (strain ATCC BAA-461 / DSM 12804 / CCUG 43448), this protein is UvrABC system protein B.